The primary structure comprises 172 residues: Cytidylate kinase (172 aa).

7–15 (GPPGSGTST) contributes to the ATP binding site.

This sequence belongs to the cytidylate kinase family. Type 2 subfamily.

The protein localises to the cytoplasm. It catalyses the reaction CMP + ATP = CDP + ADP. The catalysed reaction is dCMP + ATP = dCDP + ADP. This chain is Cytidylate kinase, found in Methanothrix thermoacetophila (strain DSM 6194 / JCM 14653 / NBRC 101360 / PT) (Methanosaeta thermophila).